The sequence spans 592 residues: Leucine-rich repeat and immunoglobulin-like domain-containing nogo receptor-interacting protein 3 (592 aa).

The first 24 residues, 1-24, serve as a signal peptide directing secretion; it reads MTCWLCVLSLPLLLLPAAPPPAGG. One can recognise an LRRNT domain in the interval 25–54; sequence CPARCECTVQTRAVACTRRRLTAVPDGIPA. The Extracellular portion of the chain corresponds to 25–531; the sequence is CPARCECTVQ…LDLTTILVST (507 aa). 11 LRR repeats span residues 55–76, 79–100, 103–124, 127–148, 151–172, 175–196, 207–228, 247–268, 271–292, 295–316, and 319–340; these read ETRL…DLAA, ALEE…AFAN, RLRV…VFTR, NLTL…TFQD, SLRR…AFAG, ALEE…SLGH, HLAI…LHLE, NLTS…ALRH, HLTC…SFRD, RLRE…AFLG, and QIRL…TFHS. A glycan (N-linked (GlcNAc...) asparagine) is linked at Asn-127. The N-linked (GlcNAc...) asparagine glycan is linked to Asn-185. N-linked (GlcNAc...) asparagine glycosylation is found at Asn-247, Asn-257, and Asn-276. An N-linked (GlcNAc...) asparagine glycan is attached at Asn-324. Residues 352–406 enclose the LRRCT domain; that stretch reads NPLACDCRLLWIVQRRKTLNFDGRLPACATPAEVRGDALRNLPDSVLFEYFVCRK. Positions 407–496 constitute an Ig-like C2-type domain; it reads PKIRERRLQR…GNDTYFATLT (90 aa). Cys-429 and Cys-480 are disulfide-bonded. N-linked (GlcNAc...) asparagine glycans are attached at residues Asn-488 and Asn-512. Residues 532–552 form a helical membrane-spanning segment; sequence AMGCITFLGVVLFCFVLLFVW. Residues 553-592 lie on the Cytoplasmic side of the membrane; it reads SRGRGQHKNNFSVEYSFRKVDGPAAAAGQGGARKFNMKMI.

It is found in the membrane. This Homo sapiens (Human) protein is Leucine-rich repeat and immunoglobulin-like domain-containing nogo receptor-interacting protein 3 (LINGO3).